The following is a 429-amino-acid chain: Histidinol dehydrogenase (429 aa).

Tyrosine 130, glutamine 191, and asparagine 214 together coordinate NAD(+). Positions 237, 259, and 262 each coordinate substrate. Zn(2+) contacts are provided by glutamine 259 and histidine 262. Catalysis depends on proton acceptor residues glutamate 327 and histidine 328. Histidine 328, aspartate 361, glutamate 415, and histidine 420 together coordinate substrate. Aspartate 361 provides a ligand contact to Zn(2+). Zn(2+) is bound at residue histidine 420.

It belongs to the histidinol dehydrogenase family. Zn(2+) is required as a cofactor.

The catalysed reaction is L-histidinol + 2 NAD(+) + H2O = L-histidine + 2 NADH + 3 H(+). It participates in amino-acid biosynthesis; L-histidine biosynthesis; L-histidine from 5-phospho-alpha-D-ribose 1-diphosphate: step 9/9. Its function is as follows. Catalyzes the sequential NAD-dependent oxidations of L-histidinol to L-histidinaldehyde and then to L-histidine. The sequence is that of Histidinol dehydrogenase from Nitrobacter winogradskyi (strain ATCC 25391 / DSM 10237 / CIP 104748 / NCIMB 11846 / Nb-255).